A 406-amino-acid polypeptide reads, in one-letter code: Putative 12-oxophytodienoate reductase 12 (406 aa).

Residues 41 to 43 (PLT), Ala-74, and Gln-119 contribute to the FMN site. Substrate is bound at residue 188-191 (HAAN). Residues Arg-240, Gly-317, and 338–339 (GR) contribute to the FMN site.

It belongs to the NADH:flavin oxidoreductase/NADH oxidase family. FMN is required as a cofactor.

Its function is as follows. Putative oxophytodienoate reductase that may be involved in the biosynthesis or metabolism of oxylipin signaling molecules. The sequence is that of Putative 12-oxophytodienoate reductase 12 (OPR12) from Oryza sativa subsp. japonica (Rice).